The chain runs to 231 residues: Modulator of macroautophagy TMEM150B-B (231 aa).

Residue M1 is a topological domain, cytoplasmic. Residues 2-22 (WAWALLPICLTVWATGGIWIV) traverse the membrane as a helical segment. At 23–50 (YAMSVSNGSVNLSDGFPYISVSGTYPPQ) the chain is on the extracellular side. N29 and N33 each carry an N-linked (GlcNAc...) asparagine glycan. Residues 51–71 (SCVFGQVLNVGAMLAVWISVI) traverse the membrane as a helical segment. At 72–83 (RFQQIRDYNCHS) the chain is on the cytoplasmic side. A helical membrane pass occupies residues 84–104 (VLNSVSLATGILCALGTSIVG). At 105 to 115 (NFQQSNQLQTH) the chain is on the extracellular side. The chain crosses the membrane as a helical span at residues 116-136 (LAGAFLAFIIGNVYFWMQTAL). The Cytoplasmic segment spans residues 137-150 (TYMVKPKHGGCYIG). The chain crosses the membrane as a helical span at residues 151–171 (PIRFCLSIACTALIVAMAVFL). Residues 172-183 (KMNMKSVSAICE) are Extracellular-facing. A helical transmembrane segment spans residues 184–204 (WIVAMILFLLYGLFAVDFWHL). The Cytoplasmic portion of the chain corresponds to 205 to 231 (DGHFFHVKKRRTVIPNEMEVSTVTLSI).

The protein belongs to the DRAM/TMEM150 family.

Its subcellular location is the cell membrane. It is found in the endosome membrane. It localises to the cytoplasmic vesicle. The protein resides in the autophagosome membrane. Functionally, modulator of macroautophagy that causes accumulation of autophagosomes under basal conditions and enhances autophagic flux. Represses cell death and promotes long-term clonogenic survival of cells grown in the absence of glucose in a macroautophagy-independent manner. May have some role in extracellular matrix engulfment or growth factor receptor recycling, both of which can modulate cell survival. The polypeptide is Modulator of macroautophagy TMEM150B-B (Xenopus laevis (African clawed frog)).